The following is a 388-amino-acid chain: Protein FAM199X (388 aa).

Residues 288-312 (SMVSSASSSGSSVGNSASNSSANMS) show a composition bias toward low complexity. The disordered stretch occupies residues 288–358 (SMVSSASSSG…QLKEQRQARK (71 aa)). Phosphoserine is present on residues Ser316 and Ser321. Residues 330–349 (DSKKRSKQRKLQQKAFRKRQ) are compositionally biased toward basic residues.

This sequence belongs to the FAM199 family.

The chain is Protein FAM199X (Fam199x) from Mus musculus (Mouse).